We begin with the raw amino-acid sequence, 629 residues long: Ionotropic receptor 75a (629 aa).

Residues 1 to 335 are Extracellular-facing; it reads MQLVQLANFV…GDVFLQPFSP (335 aa). N-linked (GlcNAc...) asparagine glycans are attached at residues Asn-61, Asn-112, Asn-126, Asn-144, Asn-166, and Asn-232. The helical transmembrane segment at 336–356 threads the bilayer; sequence LVWYLFGGVLSLIGVLLWITF. Residues 357–374 lie on the Cytoplasmic side of the membrane; sequence YMECKRMQKRWRLDYLPS. Residues 375 to 395 traverse the membrane as a helical segment; that stretch reads LLSTFLISFGAACIQSSSLIP. Over 396-402 the chain is Extracellular; sequence RSAGGRL. A helical transmembrane segment spans residues 403 to 423; that stretch reads IYFALFLISFIMYNYYTSVVV. Over 424–592 the chain is Cytoplasmic; the sequence is SSLLSSPVKS…NFVITVGMEY (169 aa). The helical transmembrane segment at 593-613 threads the bilayer; sequence VAPLLLMLICADILVVVILLV. The Extracellular portion of the chain corresponds to 614–629; sequence ELAWKRFFTRPLTIHP.

Belongs to the glutamate-gated ion channel (TC 1.A.10.1) family. In terms of tissue distribution, expressed in neurons in the antennal coeloconic 2 (ac2) sensillum class of sensory hairs (at protein level).

It is found in the cell membrane. It localises to the cell projection. Its subcellular location is the dendrite. In terms of biological role, olfactory receptor for propionic, butyric and 2-oxopentanoic acids. The polypeptide is Ionotropic receptor 75a (Drosophila sechellia (Fruit fly)).